Here is a 150-residue protein sequence, read N- to C-terminus: SsrA-binding protein (150 aa).

Residues 130 to 150 form a disordered region; the sequence is DKRESLKEKDDRREMDRMFKR.

It belongs to the SmpB family.

The protein localises to the cytoplasm. Required for rescue of stalled ribosomes mediated by trans-translation. Binds to transfer-messenger RNA (tmRNA), required for stable association of tmRNA with ribosomes. tmRNA and SmpB together mimic tRNA shape, replacing the anticodon stem-loop with SmpB. tmRNA is encoded by the ssrA gene; the 2 termini fold to resemble tRNA(Ala) and it encodes a 'tag peptide', a short internal open reading frame. During trans-translation Ala-aminoacylated tmRNA acts like a tRNA, entering the A-site of stalled ribosomes, displacing the stalled mRNA. The ribosome then switches to translate the ORF on the tmRNA; the nascent peptide is terminated with the 'tag peptide' encoded by the tmRNA and targeted for degradation. The ribosome is freed to recommence translation, which seems to be the essential function of trans-translation. The protein is SsrA-binding protein of Phocaeicola vulgatus (strain ATCC 8482 / DSM 1447 / JCM 5826 / CCUG 4940 / NBRC 14291 / NCTC 11154) (Bacteroides vulgatus).